Consider the following 453-residue polypeptide: Plasmepsin II (453 aa).

At 1–37 (MDITVREHDFKHGFIKSNSTFDGLNIDNSKNKKKIQK) the chain is on the cytoplasmic side. Positions 1–124 (MDITVREHDF…SGLTKTNYLG (124 aa)) are excised as a propeptide. The chain crosses the membrane as a helical; Signal-anchor for type II membrane protein span at residues 38–58 (GFQILYVLLFCSVMCGLFYYV). The Lumenal segment spans residues 59–453 (YENVWLQRDN…VGIALAKKNL (395 aa)). Residues 140-447 (FYGDAEVGDN…DYDNHSVGIA (308 aa)) form the Peptidase A1 domain. D158 is a catalytic residue. An intrachain disulfide couples C171 to C176. D338 is a catalytic residue. Cysteines 373 and 409 form a disulfide.

Belongs to the peptidase A1 family. As to quaternary structure, component of the hemozoin formation complex (HFC) composed of falcipains FP2A and/or FP2B, plasmepsins PMII, PMIII/HAP and PMIV, heme detoxifying protein HDP and falcilysin FLN. The HFC complex is involved in hemoglobin degradation and detoxification of heme in the food vacuole during the asexual blood stage. Post-translationally, not N-glycosylated. In terms of processing, proteolytically cleaved into the soluble active mature form in the digestive vacuole by cysteine protease falcipains; the process begins at the early ring stage. Proteolysis requires an acidic environment. In absence of falcipains, autoprocessing may serve as an alternate activation system.

It localises to the membrane. The protein resides in the vacuole lumen. It is found in the vacuole membrane. It carries out the reaction Hydrolysis of the bonds linking certain hydrophobic residues in hemoglobin or globin. Also cleaves small molecules substrates such as Ala-Leu-Glu-Arg-Thr-Phe-|-Phe(NO2)-Ser-Phe-Pro-Thr.. With respect to regulation, inhibited by pepstatin A. Its function is as follows. During the asexual blood stage, participates in initial cleavage of native host hemoglobin (Hb) resulting in Hb denaturation. May cleave preferentially denatured hemoglobin that has been cleaved by PMI. Digestion of host Hb is an essential step which provides the parasite with amino acids for protein synthesis, and regulates osmolarity. This Plasmodium falciparum (isolate HB3) protein is Plasmepsin II.